Here is a 758-residue protein sequence, read N- to C-terminus: ATP-dependent RNA helicase dbp7 (758 aa).

Disordered stretches follow at residues 28–98 (TWRD…NQPR) and 110–130 (EPQK…KPTN). Basic residues predominate over residues 35-45 (AKKIAKHHAKG). Residues 84 to 98 (GKQQSHGHPHSNQPR) are compositionally biased toward polar residues. Positions 110 to 125 (EPQKAEEVKEEGHVEN) are enriched in basic and acidic residues. Residues 138-167 (DTFTNLGLSPNLAAHLLTKLELKAPTAIQK) carry the Q motif motif. The region spanning 171 to 372 (SQLLKEEGDA…EISLKDAVHI (202 aa)) is the Helicase ATP-binding domain. ATP is bound at residue 184 to 191 (AETGSGKT). A DEAD box motif is present at residues 308–311 (DEGD). The Helicase C-terminal domain maps to 398–620 (QLKQSYAVVA…NVESGNKDWE (223 aa)). Basic and acidic residues-rich tracts occupy residues 455 to 471 (KEDG…EEKP) and 697 to 709 (GKEE…KAER). 2 disordered regions span residues 455-483 (KEDG…APAT) and 697-745 (GKEE…RAKM).

Belongs to the DEAD box helicase family. DDX31/DBP7 subfamily.

The protein localises to the nucleus. It localises to the nucleolus. The catalysed reaction is ATP + H2O = ADP + phosphate + H(+). Functionally, ATP-binding RNA helicase involved in the biogenesis of 60S ribosomal subunits and is required for the normal formation of 25S and 5.8S rRNAs. This chain is ATP-dependent RNA helicase dbp7 (dbp7), found in Aspergillus fumigatus (strain ATCC MYA-4609 / CBS 101355 / FGSC A1100 / Af293) (Neosartorya fumigata).